The primary structure comprises 377 residues: tRNA/tmRNA (uracil-C(5))-methyltransferase (377 aa).

5 residues coordinate S-adenosyl-L-methionine: Gln199, Tyr227, Asn232, Glu248, and Asp308. Residue Cys333 is the Nucleophile of the active site. The Proton acceptor role is filled by Glu367.

The protein belongs to the class I-like SAM-binding methyltransferase superfamily. RNA M5U methyltransferase family. TrmA subfamily.

It catalyses the reaction uridine(54) in tRNA + S-adenosyl-L-methionine = 5-methyluridine(54) in tRNA + S-adenosyl-L-homocysteine + H(+). It carries out the reaction uridine(341) in tmRNA + S-adenosyl-L-methionine = 5-methyluridine(341) in tmRNA + S-adenosyl-L-homocysteine + H(+). Functionally, dual-specificity methyltransferase that catalyzes the formation of 5-methyluridine at position 54 (m5U54) in all tRNAs, and that of position 341 (m5U341) in tmRNA (transfer-mRNA). In Aeromonas hydrophila subsp. hydrophila (strain ATCC 7966 / DSM 30187 / BCRC 13018 / CCUG 14551 / JCM 1027 / KCTC 2358 / NCIMB 9240 / NCTC 8049), this protein is tRNA/tmRNA (uracil-C(5))-methyltransferase.